Consider the following 648-residue polypeptide: DNA mismatch repair protein MutL (648 aa).

A disordered region spans residues 385–430; that stretch reads STVKGPAVNEPLTENTLNQQKVKTSASTPVVHTGNSVEPKPETSTA. Residues 396-430 are compositionally biased toward polar residues; the sequence is LTENTLNQQKVKTSASTPVVHTGNSVEPKPETSTA.

The protein belongs to the DNA mismatch repair MutL/HexB family.

In terms of biological role, this protein is involved in the repair of mismatches in DNA. It is required for dam-dependent methyl-directed DNA mismatch repair. May act as a 'molecular matchmaker', a protein that promotes the formation of a stable complex between two or more DNA-binding proteins in an ATP-dependent manner without itself being part of a final effector complex. This is DNA mismatch repair protein MutL from Agathobacter rectalis (strain ATCC 33656 / DSM 3377 / JCM 17463 / KCTC 5835 / VPI 0990) (Eubacterium rectale).